The chain runs to 256 residues: Small ribosomal subunit protein eS1 (256 aa).

Alanine 2 carries the post-translational modification N-acetylalanine; partial.

This sequence belongs to the eukaryotic ribosomal protein eS1 family. In terms of assembly, component of the small ribosomal subunit. Mature ribosomes consist of a small (40S) and a large (60S) subunit. The 40S subunit contains about 33 different proteins and 1 molecule of RNA (18S). The 60S subunit contains about 49 different proteins and 3 molecules of RNA (25S, 5.8S and 5S).

The protein resides in the cytoplasm. In Lachancea thermotolerans (strain ATCC 56472 / CBS 6340 / NRRL Y-8284) (Yeast), this protein is Small ribosomal subunit protein eS1.